We begin with the raw amino-acid sequence, 202 residues long: MNLEDIYRDAGAYLKGHFLLSSANHSEYYLQSAKVLENPILAGKLADELFEVIKNAGVEFDSVCSPALGGILAGYELARAGAKRFIFTERVEKVMSLRRGFSVAKGEKFIICEDIITTGGSALESAKIIEELGGVVVGFAALANRGFCKVHNMRNEGKSSCKLPADKPLFALGNFEFEIYTPEECPLCKTGSKAIKPGSRGN.

5-phospho-alpha-D-ribose 1-diphosphate-binding positions include K93 and 113-121 (EDIITTGGS). Orotate contacts are provided by T117 and R145.

This sequence belongs to the purine/pyrimidine phosphoribosyltransferase family. PyrE subfamily. As to quaternary structure, homodimer. Mg(2+) serves as cofactor.

It carries out the reaction orotidine 5'-phosphate + diphosphate = orotate + 5-phospho-alpha-D-ribose 1-diphosphate. The protein operates within pyrimidine metabolism; UMP biosynthesis via de novo pathway; UMP from orotate: step 1/2. Functionally, catalyzes the transfer of a ribosyl phosphate group from 5-phosphoribose 1-diphosphate to orotate, leading to the formation of orotidine monophosphate (OMP). The protein is Orotate phosphoribosyltransferase of Campylobacter fetus subsp. fetus (strain 82-40).